The following is a 456-amino-acid chain: MQQTVTYGAKWKQFLTIFTPIVITQLTLFSMTFFDTTMSGNYSNQALAGVAIGSSFWAPVNAAFSGLLMAITPIIAQLIGAKKEKQVKNTVHNGLYIALFLAFILILINFLVVPTILTHMPVTAEVAHIARHFLNGICIGIPAFFISAILRSFIDSLGLTRVTMLITLCTVPFNIFLNYCFIFGNFGFPEMGGAGSGYATGITYWLVVLVSVILIQTQTRLRKFGIFKGLTALRFSKVKEIIGIGVPNGLTILFETSIFSAVTILMGAFGTETIAAHQSANSVCTLLYAFPLSVASTLTILGGYETGAKRLKDAKQYRHIGMTAAILIGCINGAILFFFRDIIAGFYTNDAELSDLIMHFLVYAILFQFADAVLSPVLGALRGYKDVAITSIIAFISYWLIGLPVGYGLSFTNLGPFGYWIGLSTGLFVAAFILSIRVRKTERKLSLNAKNAEISS.

12 helical membrane-spanning segments follow: residues 13–34, 54–76, 95–117, 132–154, 161–183, 193–215, 244–266, 286–308, 321–343, 358–380, 387–409, and 414–436; these read QFLT…MTFF, SSFW…PIIA, LYIA…PTIL, HFLN…RSFI, RVTM…CFIF, GAGS…VILI, IGVP…TILM, LLYA…ETGA, GMTA…RDII, MHFL…VLGA, VAIT…GYGL, and LGPF…ILSI.

Belongs to the multi antimicrobial extrusion (MATE) (TC 2.A.66.1) family.

It localises to the cell membrane. Functionally, multidrug efflux pump. The polypeptide is Probable multidrug resistance protein NorM (norM) (Listeria innocua serovar 6a (strain ATCC BAA-680 / CLIP 11262)).